A 141-amino-acid chain; its full sequence is ATP synthase epsilon chain (141 aa).

It belongs to the ATPase epsilon chain family. In terms of assembly, F-type ATPases have 2 components, CF(1) - the catalytic core - and CF(0) - the membrane proton channel. CF(1) has five subunits: alpha(3), beta(3), gamma(1), delta(1), epsilon(1). CF(0) has three main subunits: a, b and c.

The protein resides in the cell inner membrane. Produces ATP from ADP in the presence of a proton gradient across the membrane. The protein is ATP synthase epsilon chain of Pseudomonas fluorescens (strain Pf0-1).